Here is a 673-residue protein sequence, read N- to C-terminus: Annexin A6 (673 aa).

A2 is subject to N-acetylalanine. S13 carries the post-translational modification Phosphoserine. Annexin repeat units lie at residues 20 to 91, 92 to 163, 175 to 247, 251 to 322, 363 to 434, 435 to 506, 521 to 595, and 599 to 670; these read FDPN…GLMR, PPAY…VLLQ, DLVQ…AVVK, STPE…KLSG, FNPD…GLMM, PPAH…SLAT, EDAQ…AIVQ, and NKPL…ALCG. Position 30 is a phosphotyrosine (Y30). N6-acetyllysine occurs at positions 63, 68, 75, and 81. Y201 bears the Phosphotyrosine mark. An N6-acetyllysine mark is found at K306, K370, and K418. S422 carries the post-translational modification Phosphoserine. Residue K483 is modified to N6-acetyllysine. At S537 the chain carries Phosphoserine. K620 is modified (N6-acetyllysine).

It belongs to the annexin family. In terms of processing, phosphorylated in response to growth factor stimulation.

The protein resides in the cytoplasm. The protein localises to the melanosome. Its function is as follows. May associate with CD21. May regulate the release of Ca(2+) from intracellular stores. The sequence is that of Annexin A6 (ANXA6) from Homo sapiens (Human).